The sequence spans 473 residues: Chromosomal replication initiator protein DnaA (473 aa).

Residues 1–90 are domain I, interacts with DnaA modulators; sequence MSSSLWLQCL…KRVTAPKSET (90 aa). A domain II region spans residues 91 to 136; sequence IAPARTRTAADVAAESSAPAQLQARKPVHNIWRDEEPVAVDLNHRS. The tract at residues 137 to 353 is domain III, AAA+ region; the sequence is NVNPKHKFNN…GALNRVIANA (217 aa). Positions 181, 183, 184, and 185 each coordinate ATP. Residues 354-473 form a domain IV, binds dsDNA region; sequence NFTGRPITID…YSNLIRTLSS (120 aa).

Belongs to the DnaA family. Oligomerizes as a right-handed, spiral filament on DNA at oriC.

It localises to the cytoplasm. Plays an essential role in the initiation and regulation of chromosomal replication. ATP-DnaA binds to the origin of replication (oriC) to initiate formation of the DNA replication initiation complex once per cell cycle. Binds the DnaA box (a 9 base pair repeat at the origin) and separates the double-stranded (ds)DNA. Forms a right-handed helical filament on oriC DNA; dsDNA binds to the exterior of the filament while single-stranded (ss)DNA is stabiized in the filament's interior. The ATP-DnaA-oriC complex binds and stabilizes one strand of the AT-rich DNA unwinding element (DUE), permitting loading of DNA polymerase. After initiation quickly degrades to an ADP-DnaA complex that is not apt for DNA replication. Binds acidic phospholipids. This chain is Chromosomal replication initiator protein DnaA, found in Vibrio atlanticus (strain LGP32) (Vibrio splendidus (strain Mel32)).